Reading from the N-terminus, the 293-residue chain is MPWIQLKLNTTGTNAEELSDALVETGAVSVTFQDTHDTPVFEPLPGETRLWGDTDVIGLFDAETDMKEVVAILEHHPLLGAGFAHKIEQLEDKDWEREWMDNFHPMRFGERLWICPSWRDVPDENAVNVMLDPGLAFGTGTHPTTSLCLQWLDGLDLNGKTVIDFGCGSGILAIAALKLGAAKAIGIDIDPQAIQASRDNAERNGVSERLELYLPKDQPEAMKADVVVANILAGPLRELAPLISVLPVESGLLGLSGILASQAESVCEAYTELFTLDPVVEKEEWCRITGRKK.

Residues Thr-145, Gly-166, Asp-188, and Asn-230 each contribute to the S-adenosyl-L-methionine site.

The protein belongs to the methyltransferase superfamily. PrmA family.

Its subcellular location is the cytoplasm. It catalyses the reaction L-lysyl-[protein] + 3 S-adenosyl-L-methionine = N(6),N(6),N(6)-trimethyl-L-lysyl-[protein] + 3 S-adenosyl-L-homocysteine + 3 H(+). In terms of biological role, methylates ribosomal protein L11. In Citrobacter koseri (strain ATCC BAA-895 / CDC 4225-83 / SGSC4696), this protein is Ribosomal protein L11 methyltransferase.